We begin with the raw amino-acid sequence, 317 residues long: Malate dehydrogenase (317 aa).

Residues 7–13 (GAAGGIG) and Asp-34 contribute to the NAD(+) site. Substrate is bound by residues Arg-81 and Arg-87. NAD(+)-binding positions include Asn-94 and 117–119 (VTN). Substrate contacts are provided by Asn-119 and Arg-153. His-177 serves as the catalytic Proton acceptor. Met-231 is a binding site for NAD(+).

This sequence belongs to the LDH/MDH superfamily. MDH type 1 family. In terms of assembly, homodimer.

It carries out the reaction (S)-malate + NAD(+) = oxaloacetate + NADH + H(+). Catalyzes the reversible oxidation of malate to oxaloacetate. This chain is Malate dehydrogenase, found in Actinobacillus pleuropneumoniae serotype 7 (strain AP76).